The chain runs to 419 residues: MELPVPVAILTSNQQTKWRLLIASFSSHKNTQACLNFLRGTFCKTDDCYCAGLLVLVSLIQTEDNMIEKDRVIQMAILVRSLAEYCFDEIFQRVYPENIESMFTECSRRLALLLECECGCMECLETVKGLQKAQISYRMPRLNPHEISSYEFTLSSVYNSAVLCNSVPVSKDLLRDIVMGSHFEGGFSIEAKKEASLLAICITFCWLFYKMQQTVTGALEDIFEDMMQFAVTYKIPLESKRDLCRLDVRLLKKIKERGAFMGGNKNVVKFPIAAGTSLYKQLSAYKRQLIGDRCPFDPDYENLKKMIQDSAGLFTQTPPCTEEGSPPDITVQECQSESVGSPDKGEGDCPHPINTSPCLKQVSEQHLLALDALLAESSSCPETQTSLSGVNSDEYLSDPEVTSENYLTLEEFERKINLL.

This is an uncharacterized protein from Connochaetes taurinus (Blue wildebeest).